Reading from the N-terminus, the 87-residue chain is uncharacterized protein (87 aa).

Residues 13–33 (LMIVSAVFGGIGIITTIVFVI) form a helical membrane-spanning segment. Positions 66–87 (EECGGSTETSSSKPKKKAKKEV) are disordered. Over residues 78–87 (KPKKKAKKEV) the composition is skewed to basic residues.

It localises to the membrane. This is an uncharacterized protein from Caenorhabditis elegans.